Consider the following 313-residue polypeptide: Small ribosomal subunit protein uS2 (313 aa).

Residues 281-301 (AAPAAPAVEPAPEAAQEATAE) are disordered.

This sequence belongs to the universal ribosomal protein uS2 family.

The polypeptide is Small ribosomal subunit protein uS2 (Caulobacter sp. (strain K31)).